A 328-amino-acid chain; its full sequence is tRNA uridine(34) hydroxylase (328 aa).

The region spanning 130–224 (LDEDTVVLDT…YGKDPEVQGE (95 aa)) is the Rhodanese domain. The active-site Cysteine persulfide intermediate is Cys184.

This sequence belongs to the TrhO family.

It catalyses the reaction uridine(34) in tRNA + AH2 + O2 = 5-hydroxyuridine(34) in tRNA + A + H2O. Catalyzes oxygen-dependent 5-hydroxyuridine (ho5U) modification at position 34 in tRNAs. This chain is tRNA uridine(34) hydroxylase, found in Streptococcus agalactiae serotype Ia (strain ATCC 27591 / A909 / CDC SS700).